A 62-amino-acid polypeptide reads, in one-letter code: MPYVTVKMLEGRTDEQKRNLVEKVTEAVKETTGASEEKIVVFIEEMRKDHYAVAGKRLSDME.

P2 acts as the Proton acceptor; via imino nitrogen in catalysis. 9 to 12 (LEGR) contacts substrate.

The protein belongs to the 4-oxalocrotonate tautomerase family. Homohexamer.

It carries out the reaction (2Z,4E)-2-hydroxyhexa-2,4-dienedioate = (3E)-2-oxohex-3-enedioate. Its function is as follows. Catalyzes both 1,3- and 1,5-keto-enol tautomerization of the diacid 2-hydroxymuconate (2-hydroxy-2,4-hexadienedioate) to produce 2-oxo-4-hexenedioate. This reaction is highly stereoselective and produces a mixture of stereoisomers, where the (3S)-isomer of 2-oxo-4-hexenedioate predominates. Also catalyzes the tautomerization of 2-hydroxymuconate to 2-oxo-3-hexenedioate, however this reaction is slower and occurs after the tautomerization of 2-hydroxymuconate to 2-oxo-4-hexenedioate. Using 2-hydroxy-2,4-pentadienoate, phenylenolpyruvate, (p-hydroxyphenyl)-enolpyruvate and 2-hydroxy-2,4-heptadiene-1,7-dioate, YwhB is a highly efficient 1,3-keto-enol tautomerase, but clearly not a 1,5-keto-enol tautomerase. Tautomerization of the two monoacids 2-hydroxy-2,4-pentadienoate and phenylenolpyruvate produces a mixture of stereoisomers, where the (3R)-isomers predominate. In Bacillus subtilis (strain 168), this protein is 2-hydroxymuconate tautomerase (ywhB).